The primary structure comprises 376 residues: Peroxisomal membrane protein PEX14 (376 aa).

The segment covering 1–12 has biased composition (polar residues); the sequence is MASSEQAEQPNQ. The disordered stretch occupies residues 1–24; that stretch reads MASSEQAEQPNQPSSPPGSENVVP. A2 carries the N-acetylalanine modification. Topologically, residues 2–108 are peroxisomal; sequence ASSEQAEQPN…YSPRGSRWRD (107 aa). K34 is modified (N6-acetyllysine). The interval 70 to 102 is disordered; sequence SGTAADEPSPLGPATPVVPVQPPHLTPQPYSPR. Residues 88–99 show a composition bias toward pro residues; that stretch reads PVQPPHLTPQPY. The chain crosses the membrane as a helical span at residues 109–127; it reads YGALAIIMAGIAFGFHQLY. At 128-376 the chain is on the cytoplasmic side; that stretch reads KRYLLPLILG…EGASNETERD (249 aa). The segment at 230–376 is disordered; that stretch reads PPSPSAPKIP…EGASNETERD (147 aa). A Phosphoserine modification is found at S232. Low complexity-rich tracts occupy residues 247-259 and 265-275; these read SSSP…VNHH and SPVSNESTSSS. Phosphoserine occurs at positions 282 and 334. Residues 323–341 are compositionally biased toward acidic residues; the sequence is KEDEDDEDDDVSHVDEEDV. Positions 359-376 are enriched in basic and acidic residues; the sequence is QVEKLRRPEGASNETERD.

The protein belongs to the peroxin-14 family. As to quaternary structure, interacts with PEX13; forming the PEX13-PEX14 docking complex. Interacts with PEX5 (via WxxxF/Y motifs). Interacts with PEX19. Interacts with tubulin.

It localises to the peroxisome membrane. Its function is as follows. Component of the PEX13-PEX14 docking complex, a translocon channel that specifically mediates the import of peroxisomal cargo proteins bound to PEX5 receptor. The PEX13-PEX14 docking complex forms a large import pore which can be opened to a diameter of about 9 nm. Mechanistically, PEX5 receptor along with cargo proteins associates with the PEX14 subunit of the PEX13-PEX14 docking complex in the cytosol, leading to the insertion of the receptor into the organelle membrane with the concomitant translocation of the cargo into the peroxisome matrix. Plays a key role for peroxisome movement through a direct interaction with tubulin. This chain is Peroxisomal membrane protein PEX14, found in Mus musculus (Mouse).